Consider the following 119-residue polypeptide: Protein TusC (119 aa).

It belongs to the DsrF/TusC family. As to quaternary structure, heterohexamer, formed by a dimer of trimers. The hexameric TusBCD complex contains 2 copies each of TusB, TusC and TusD. The TusBCD complex interacts with TusE.

The protein resides in the cytoplasm. In terms of biological role, part of a sulfur-relay system required for 2-thiolation of 5-methylaminomethyl-2-thiouridine (mnm(5)s(2)U) at tRNA wobble positions. The polypeptide is Protein TusC (Buchnera aphidicola subsp. Schizaphis graminum (strain Sg)).